Consider the following 224-residue polypeptide: UPF0758 protein Pmen_4376 (224 aa).

An MPN domain is found at 102 to 224 (ALESPQAVRD…PLSMAELGWM (123 aa)). Histidine 173, histidine 175, and aspartate 186 together coordinate Zn(2+). The JAMM motif motif lies at 173 to 186 (HNHPSGVCEPSQAD).

Belongs to the UPF0758 family.

The sequence is that of UPF0758 protein Pmen_4376 from Ectopseudomonas mendocina (strain ymp) (Pseudomonas mendocina).